The chain runs to 368 residues: Probable leucine aminopeptidase ARB_03492 (368 aa).

Residues 1–18 form the signal peptide; sequence MKVSAIAAVAALAAVAVA. Asn92 carries an N-linked (GlcNAc...) asparagine glycan. The Zn(2+) site is built by His172 and Asp191. N-linked (GlcNAc...) asparagine glycosylation is found at Asn192 and Asn216. Zn(2+)-binding residues include Glu230 and Asp257. Residues Cys301 and Cys305 are joined by a disulfide bond. His334 contributes to the Zn(2+) binding site.

It belongs to the peptidase M28 family. M28E subfamily. As to quaternary structure, monomer. Requires Zn(2+) as cofactor.

It localises to the secreted. In terms of biological role, probable extracellular aminopeptidase which contributes to pathogenicity. This is Probable leucine aminopeptidase ARB_03492 from Arthroderma benhamiae (strain ATCC MYA-4681 / CBS 112371) (Trichophyton mentagrophytes).